The sequence spans 341 residues: Mitochondrial transcription factor 1 (341 aa).

Leu23, Glu77, Asp101, and Asn137 together coordinate S-adenosyl-L-methionine.

Belongs to the class I-like SAM-binding methyltransferase superfamily. rRNA adenine N(6)-methyltransferase family.

It is found in the mitochondrion intermembrane space. Mitochondrial transcription factor that confers selective promoter recognition on the core subunit of the yeast mitochondrial RNA polymerase. Interacts with DNA in a non-specific manner. This is Mitochondrial transcription factor 1 (MTF1) from Saccharomyces cerevisiae (strain ATCC 204508 / S288c) (Baker's yeast).